An 82-amino-acid chain; its full sequence is UPF0180 protein BH2667 (82 aa).

Belongs to the UPF0180 family.

The chain is UPF0180 protein BH2667 from Halalkalibacterium halodurans (strain ATCC BAA-125 / DSM 18197 / FERM 7344 / JCM 9153 / C-125) (Bacillus halodurans).